The chain runs to 524 residues: Leukotriene-B4 omega-hydroxylase 3 (524 aa).

Heme contacts are provided by Glu-328 and Cys-468.

It belongs to the cytochrome P450 family. Requires heme as cofactor.

The protein localises to the endoplasmic reticulum membrane. It is found in the microsome membrane. The enzyme catalyses leukotriene B4 + reduced [NADPH--hemoprotein reductase] + O2 = 20-hydroxy-leukotriene B4 + oxidized [NADPH--hemoprotein reductase] + H2O + H(+). It participates in lipid metabolism; leukotriene B4 degradation. Cytochromes P450 are a group of heme-thiolate monooxygenases. Catalyzes the omega-hydroxylation of LTB4. This chain is Leukotriene-B4 omega-hydroxylase 3 (Cyp4f14), found in Mus musculus (Mouse).